Consider the following 414-residue polypeptide: Esterase FrsA (414 aa).

The protein belongs to the FrsA family.

The catalysed reaction is a carboxylic ester + H2O = an alcohol + a carboxylate + H(+). Its function is as follows. Catalyzes the hydrolysis of esters. This Escherichia coli O157:H7 protein is Esterase FrsA.